A 63-amino-acid chain; its full sequence is Large ribosomal subunit protein bL28 (63 aa).

Belongs to the bacterial ribosomal protein bL28 family.

The polypeptide is Large ribosomal subunit protein bL28 (Thermomicrobium roseum (strain ATCC 27502 / DSM 5159 / P-2)).